The sequence spans 517 residues: Beta-galactoside alpha-2,6-sialyltransferase 2 (517 aa).

Residues 1–10 (MKPNLKQWKQ) are Cytoplasmic-facing. Residues 11–31 (FMLFGICAWGLLFLVIFVYFT) form a helical; Signal-anchor for type II membrane protein membrane-spanning segment. The Lumenal portion of the chain corresponds to 32–517 (DSNSVEPVPS…IHCPIKDHIT (486 aa)). N-linked (GlcNAc...) asparagine glycans are attached at residues Asn-201, Asn-298, and Asn-328. 3 disulfides stabilise this stretch: Cys-244–Cys-510, Cys-287–Cys-439, and Cys-457–Cys-468.

The protein belongs to the glycosyltransferase 29 family.

The protein resides in the golgi apparatus. It localises to the golgi stack membrane. The enzyme catalyses a beta-D-galactoside + CMP-N-acetyl-beta-neuraminate = an N-acetyl-alpha-neuraminyl-(2-&gt;6)-beta-D-galactosyl derivative + CMP + H(+). Transfers sialic acid from the donor of substrate CMP-sialic acid to galactose containing acceptor substrates. The polypeptide is Beta-galactoside alpha-2,6-sialyltransferase 2 (st6gal2) (Xenopus tropicalis (Western clawed frog)).